The sequence spans 154 residues: Ribonuclease P protein subunit p21 (154 aa).

N-acetylalanine is present on Ala-2. Zn(2+)-binding residues include Cys-62, Cys-65, Cys-92, and Cys-95. The segment at 117-154 is disordered; sequence QLGSQADSKPLQPLPNTAHSISDRLPEEKMQTQGSSNQ. A compositionally biased stretch (basic and acidic residues) spans 137-146; the sequence is ISDRLPEEKM.

It belongs to the eukaryotic/archaeal RNase P protein component 4 family. In terms of assembly, RNase P consists of a catalytic RNA moiety and about 10 protein subunits; POP1, POP4, POP5, POP7, RPP14, RPP21, RPP25, RPP30, RPP38 and RPP40. Within the RNase P complex, POP1, POP7 and RPP25 form the 'finger' subcomplex, POP5, RPP14, RPP40 and homodimeric RPP30 form the 'palm' subcomplex, and RPP21, POP4 and RPP38 form the 'wrist' subcomplex. All subunits of the RNase P complex interact with the catalytic RNA.

It is found in the nucleus. The protein resides in the nucleolus. In terms of biological role, component of ribonuclease P, a ribonucleoprotein complex that generates mature tRNA molecules by cleaving their 5'-ends. The protein is Ribonuclease P protein subunit p21 (RPP21) of Homo sapiens (Human).